A 593-amino-acid polypeptide reads, in one-letter code: Double-stranded RNA-binding protein 2 (593 aa).

2 DRBM domains span residues 1–70 and 87–155; these read MYKN…ELSK and IYKN…ELKQ. Polar residues predominate over residues 188-197; the sequence is LNQTNGGKTP. Disordered regions lie at residues 188-221, 357-408, and 546-593; these read LNQT…KSNA, APDF…ESNQ, and VNSS…KLHI. The segment covering 205–219 has biased composition (low complexity); the sequence is SSNRPSSRRPSYPKS. Polar residues predominate over residues 378-408; it reads ESSPASEQESKSHTASSSATRSPSQQLESNQ. Positions 572–586 are enriched in low complexity; sequence RTNTSDTSNAATASS.

Its function is as follows. Binds double-stranded RNA. The sequence is that of Double-stranded RNA-binding protein 2 (DRB2) from Oryza sativa subsp. japonica (Rice).